The following is a 490-amino-acid chain: Beta-N-acetyl-D-glucosaminide beta-1,4-N-acetylglucosaminyl-transferase (490 aa).

At 1–30 the chain is on the cytoplasmic side; it reads MYLVVCWGRVTGNMISTRHCFSRCKSRSVR. A helical; Signal-anchor for type II membrane protein transmembrane segment spans residues 31–50; it reads VIKATAMLFVAAMLFLALHM. N-linked (GlcNAc...) asparagine glycans are attached at residues Asn51, Asn82, Asn441, Asn459, and Asn485. The Lumenal portion of the chain corresponds to 51 to 490; the sequence is NFSHEASQQN…YLTGNFTIIS (440 aa).

Belongs to the glycosyltransferase 7 family.

The protein resides in the golgi apparatus membrane. The catalysed reaction is an N-acetyl-beta-D-glucosaminyl derivative + UDP-N-acetyl-alpha-D-glucosamine = an N-acetyl-beta-D-glucosaminyl-(1-&gt;4)-N-acetyl-beta-D-glucosaminyl derivative + UDP + H(+). It participates in protein modification; protein glycosylation. The sequence is that of Beta-N-acetyl-D-glucosaminide beta-1,4-N-acetylglucosaminyl-transferase (GNT) from Lymnaea stagnalis (Great pond snail).